A 40-amino-acid chain; its full sequence is uncharacterized protein (40 aa).

The first 27 residues, M1–F27, serve as a signal peptide directing secretion.

This is an uncharacterized protein from Archaeoglobus fulgidus (strain ATCC 49558 / DSM 4304 / JCM 9628 / NBRC 100126 / VC-16).